The chain runs to 281 residues: NAD-dependent protein deacetylase 1 (281 aa).

The 281-residue stretch at 1-281 folds into the Deacetylase sirtuin-type domain; it reads MEEGAALEGV…FDQILDALDL (281 aa). NAD(+) contacts are provided by residues 24 to 44 and 102 to 105; these read GAGV…GSLN and QNVD. His-120 acts as the Proton acceptor in catalysis. Zn(2+) contacts are provided by Cys-128, Cys-131, Cys-183, and Cys-186. Residues 224-226, 250-252, and Val-268 each bind NAD(+); these read GSS and NGG.

This sequence belongs to the sirtuin family. Class II subfamily. It depends on Zn(2+) as a cofactor.

Its subcellular location is the cytoplasm. It catalyses the reaction N(6)-acetyl-L-lysyl-[protein] + NAD(+) + H2O = 2''-O-acetyl-ADP-D-ribose + nicotinamide + L-lysyl-[protein]. Its function is as follows. NAD-dependent protein deacetylase which modulates the activities of several enzymes which are inactive in their acetylated form. In Corynebacterium efficiens (strain DSM 44549 / YS-314 / AJ 12310 / JCM 11189 / NBRC 100395), this protein is NAD-dependent protein deacetylase 1.